We begin with the raw amino-acid sequence, 78 residues long: MLKRSKFETTQSQIMHRAEDLISAASNRYRITVQVANRAKRRRYEEFESAEDSMMKPVLRAIIEMSDELTQPEIIGEI.

The protein belongs to the RNA polymerase subunit omega family. In cyanobacteria the RNAP catalytic core is composed of 2 alpha, 1 beta, 1 beta', 1 gamma and 1 omega subunit. When a sigma factor is associated with the core the holoenzyme is formed, which can initiate transcription.

It carries out the reaction RNA(n) + a ribonucleoside 5'-triphosphate = RNA(n+1) + diphosphate. Promotes RNA polymerase assembly. Latches the N- and C-terminal regions of the beta' subunit thereby facilitating its interaction with the beta and alpha subunits. The polypeptide is DNA-directed RNA polymerase subunit omega (Trichormus variabilis (strain ATCC 29413 / PCC 7937) (Anabaena variabilis)).